The primary structure comprises 170 residues: Calcineurin subunit B type 2 (170 aa).

A lipid anchor (N-myristoyl glycine) is attached at Gly-2. EF-hand domains follow at residues 18–46 (DEIK…FMSL), 50–85 (RHNP…FSVK), 87–122 (DEEQ…MVGN), and 128–163 (QLQQ…LEIH). Positions 31, 33, 35, 37, 42, 63, 65, 67, 69, 74, 100, 102, 104, 106, and 111 each coordinate Ca(2+). The tract at residues 131-136 (QLVDKT) is calcineurin A binding. Ca(2+)-binding residues include Asp-141, Asp-143, Asp-145, Lys-147, and Glu-152.

Belongs to the calcineurin regulatory subunit family. Forms a complex composed of a calmodulin-dependent catalytic subunit (also known as calcineurin A) and a regulatory Ca(2+)-binding subunit (also known as calcineurin B). There are three catalytic subunits, each encoded by a separate gene (PPP3CA, PPP3CB, and PPP3CC) and two regulatory subunits which are also encoded by separate genes (PPP3R1 and PPP3R2). Interacts with SPATA33 (via PQIIIT motif). In terms of tissue distribution, testis-specific.

The protein resides in the mitochondrion. Regulatory subunit of calcineurin, a calcium-dependent, calmodulin stimulated protein phosphatase. Confers calcium sensitivity. This chain is Calcineurin subunit B type 2 (PPP3R2), found in Homo sapiens (Human).